Consider the following 871-residue polypeptide: Transient receptor potential cation channel subfamily V member 4 (871 aa).

Disordered stretches follow at residues 1 to 68 (MADP…PNLR) and 110 to 143 (YGTY…PQPP). Residues 1 to 469 (MADPGDGPRA…RDKWRKFGAV (469 aa)) lie on the Cytoplasmic side of the membrane. Tyrosine 110 carries the phosphotyrosine; by SRC-type Tyr-kinases modification. Basic and acidic residues predominate over residues 116–129 (HPSDNKRWRRKVVE). Residues lysine 192, lysine 197, asparagine 201, 236–239 (YRGQ), and arginine 248 each bind ATP. 2 ANK repeats span residues 237-266 (RGQT…DVHA) and 284-313 (FGEL…KKAD). An a 1,2-diacyl-sn-glycero-3-phospho-(1D-myo-inositol-4,5-bisphosphate)-binding site is contributed by 249–251 (RCK). The residue at position 253 (tyrosine 253) is a Phosphotyrosine; by LYN. A 1,2-diacyl-sn-glycero-3-phospho-(1D-myo-inositol-4,5-bisphosphate) contacts are provided by residues 296–299 (NQPH) and lysine 344. Residues 369-398 (DGLSPLMMAAKTGKIGVFQHIIRREVTDED) form an ANK 3 repeat. A helical membrane pass occupies residues 470-490 (SFYINVVSYLCAMVIFTLTAY). Residues 491–507 (YQPLEGTPPYPYRTTVD) are Extracellular-facing. A helical transmembrane segment spans residues 508–534 (YLRLAGEVITLFTGVLFFFTSIKDLFT). Residues 535–547 (KKCPGVNSLFVDG) lie on the Cytoplasmic side of the membrane. Residues 548 to 568 (SFQLLYFIYSVLVVVSAALYL) form a helical membrane-spanning segment. The Extracellular segment spans residues 569 to 572 (AGIE). A helical membrane pass occupies residues 573-593 (AYLAVMVFALVLGWMNALYFT). At 594-608 (RGLKLTGTYSIMIQK) the chain is on the cytoplasmic side. A helical membrane pass occupies residues 609-636 (ILFKDLFRFLLVYLLFMIGYASALVTLL). Over 637-665 (NPCTNMKVCDEDQSNCTVPTYPACRDSET) the chain is Extracellular. Asparagine 651 carries N-linked (GlcNAc...) asparagine glycosylation. The segment at residues 666 to 685 (FSAFLLDLFKLTIGMGDLEM) is an intramembrane region (pore-forming). A Selectivity filter motif is present at residues 679–682 (GMGD). A Ca(2+)-binding site is contributed by aspartate 682. The Extracellular segment spans residues 686–693 (LSSAKYPV). A helical transmembrane segment spans residues 694–722 (VFILLLVTYIILTFVLLLNMLIALMGETV). Topologically, residues 723–871 (GQVSKESKHI…PKWRTDDAPL (149 aa)) are cytoplasmic. The residue at position 805 (tyrosine 805) is a Phosphotyrosine; by SRC-type Tyr-kinases. The interval 812-831 (HTVGRLRRDRWSSVVPRVVE) is interaction with calmodulin and ITPR3. Serine 824 carries the post-translational modification Phosphoserine; by PKC and PKA. The disordered stretch occupies residues 850 to 871 (NPNCDGHQQGYAPKWRTDDAPL).

It belongs to the transient receptor (TC 1.A.4) family. TrpV subfamily. TRPV4 sub-subfamily. In terms of assembly, homotetramer. Interacts with calmodulin. Interacts with CTNNB1. The TRPV4 and CTNNB1 complex can interact with CDH1. Part of a complex containing MLC1, AQP4, HEPACAM and ATP1B1. Interacts with MAP7 and Src family Tyr protein kinases LYN, SRC, FYN, HCK, LCK and YES. Interacts with PACSIN1, PACSIN2 and PACSIN3 (via SH3 domain). Interacts with ITPR3. Interacts with AQP5; the interaction is probably indirect and regulates TRPV4 activation by hypotonicity. Interacts with ANO1. Interacts (via C-terminus) with PKD2 (via C-terminus). Interacts with DDX3X; this interaction is decreased when the channel is activated. N-glycosylated. In terms of tissue distribution, detected in liver, kidney, heart, brain cortex, cerebellum and brainstem (at protein level). Expressed in salivary glands (at protein level). Expressed in heart, lung, spleen, liver, kidney, brain, skeletal muscle and testis. In the central nervous system, expressed in the lamina terminalis (arched vascular organ and neurons of the subfornical organ), median preoptic area, ventral hippocampal commissure, and ependymal cells of the choroid plexus. In the cochlea, expressed in both inner and outer hair cells, and in marginal cells of the cochlear stria vascularis. Expressed in large neurons of the trigeminal ganglion. In the kidney cortex, strongly expressed by epithelial cells of tubules and much weaker in glomeruli.

Its subcellular location is the cell membrane. The protein localises to the apical cell membrane. It is found in the cell junction. The protein resides in the adherens junction. It localises to the cell projection. Its subcellular location is the cilium. The enzyme catalyses Ca(2+)(in) = Ca(2+)(out). Its function is as follows. Non-selective calcium permeant cation channel involved in osmotic sensitivity and mechanosensitivity. Activation by exposure to hypotonicity within the physiological range exhibits an outward rectification. Also activated by heat, low pH, citrate and phorbol esters. Increase of intracellular Ca(2+) potentiates currents. Channel activity seems to be regulated by a calmodulin-dependent mechanism with a negative feedback mechanism. Acts as a regulator of intracellular Ca(2+) in synoviocytes. Plays an obligatory role as a molecular component in the nonselective cation channel activation induced by 4-alpha-phorbol 12,13-didecanoate and hypotonic stimulation in synoviocytes and also regulates production of IL-8. Together with PKD2, forms mechano- and thermosensitive channels in cilium. Promotes cell-cell junction formation in skin keratinocytes and plays an important role in the formation and/or maintenance of functional intercellular barriers. Negatively regulates expression of PPARGC1A, UCP1, oxidative metabolism and respiration in adipocytes. Regulates expression of chemokines and cytokines related to pro-inflammatory pathway in adipocytes. Together with AQP5, controls regulatory volume decrease in salivary epithelial cells. Required for normal development and maintenance of bone and cartilage. In its inactive state, may sequester DDX3X at the plasma membrane. When activated, the interaction between both proteins is affected and DDX3X relocalizes to the nucleus. In neurons of the central nervous system, could play a role in triggering voluntary water intake in response to increased sodium concentration in body fluid. The polypeptide is Transient receptor potential cation channel subfamily V member 4 (Trpv4) (Mus musculus (Mouse)).